We begin with the raw amino-acid sequence, 323 residues long: tRNA U34 carboxymethyltransferase (323 aa).

Carboxy-S-adenosyl-L-methionine is bound by residues Lys91, Trp105, Lys110, Gly130, 152–154 (DPT), 181–182 (IE), Met196, Tyr200, and Arg315.

This sequence belongs to the class I-like SAM-binding methyltransferase superfamily. CmoB family. Homotetramer.

It carries out the reaction carboxy-S-adenosyl-L-methionine + 5-hydroxyuridine(34) in tRNA = 5-carboxymethoxyuridine(34) in tRNA + S-adenosyl-L-homocysteine + H(+). Functionally, catalyzes carboxymethyl transfer from carboxy-S-adenosyl-L-methionine (Cx-SAM) to 5-hydroxyuridine (ho5U) to form 5-carboxymethoxyuridine (cmo5U) at position 34 in tRNAs. This is tRNA U34 carboxymethyltransferase from Photorhabdus laumondii subsp. laumondii (strain DSM 15139 / CIP 105565 / TT01) (Photorhabdus luminescens subsp. laumondii).